A 75-amino-acid chain; its full sequence is Endogenous retrovirus group K member 24 Np9 protein (75 aa).

The segment at 22–43 (TAPKRQRPSRTGHDDDGGFVEK) is disordered. Residues 32–43 (TGHDDDGGFVEK) show a composition bias toward basic and acidic residues.

Transcript detectable in many tumor cell lines and tumor tissues.

Its subcellular location is the nucleus. May possess a function in tumorigenesis. The polypeptide is Endogenous retrovirus group K member 24 Np9 protein (ERVK-24) (Homo sapiens (Human)).